We begin with the raw amino-acid sequence, 285 residues long: Probable endonuclease 4 (285 aa).

Zn(2+) contacts are provided by histidine 69, histidine 109, glutamate 145, aspartate 179, histidine 182, histidine 216, aspartate 229, histidine 231, and glutamate 261.

It belongs to the AP endonuclease 2 family. Requires Zn(2+) as cofactor.

The enzyme catalyses Endonucleolytic cleavage to 5'-phosphooligonucleotide end-products.. In terms of biological role, endonuclease IV plays a role in DNA repair. It cleaves phosphodiester bonds at apurinic or apyrimidinic (AP) sites, generating a 3'-hydroxyl group and a 5'-terminal sugar phosphate. This is Probable endonuclease 4 from Salmonella newport (strain SL254).